A 200-amino-acid chain; its full sequence is Transcription factor FapR (200 aa).

This sequence belongs to the FapR family.

Its function is as follows. Transcriptional factor involved in regulation of membrane lipid biosynthesis by repressing genes involved in fatty acid and phospholipid metabolism. The sequence is that of Transcription factor FapR from Thermoanaerobacter pseudethanolicus (strain ATCC 33223 / 39E) (Clostridium thermohydrosulfuricum).